Reading from the N-terminus, the 417-residue chain is MFDESYTIKNFDDVLFKAISDEKRRQEEHIELIASENYVSPRVLEAQGSVLTNKYAEGYPGKRYYGGCEFVDVAEELAISRAKLLFGAHYVNVQPHSGSQANAAVMMALLSPGDTFMGMALPHGGHLTHGSKVNFSGKLYHSVEYGVDNNTGLIDYDALEKLALQHKPKLIIAGFSAYSRILDWARFREIADKVGAYLMADIAHVAGLVAVGLYPSPVPYADVVTTTTHKTLRGPRGGLILCKENEEIEKKLNSAVFPGMQGGPLMHVIAAKAVAFAEALLPEFKTYQQQVLANARTMCSVLQSRGYDIVSGGTDNHLLLVDLINKGITGKEADAALGRANITVNKNSVPNDPRSPFVTSGLRLGTPAATTRGFKEREITLLSNWVADVLDNVHDETNISRVKTQVLLLCREFPVYA.

(6S)-5,6,7,8-tetrahydrofolate contacts are provided by residues leucine 121 and 125-127 (GHL). Residue lysine 230 is modified to N6-(pyridoxal phosphate)lysine. 355–357 (SPF) contacts (6S)-5,6,7,8-tetrahydrofolate.

It belongs to the SHMT family. In terms of assembly, homodimer. Requires pyridoxal 5'-phosphate as cofactor.

It localises to the cytoplasm. It catalyses the reaction (6R)-5,10-methylene-5,6,7,8-tetrahydrofolate + glycine + H2O = (6S)-5,6,7,8-tetrahydrofolate + L-serine. Its pathway is one-carbon metabolism; tetrahydrofolate interconversion. It functions in the pathway amino-acid biosynthesis; glycine biosynthesis; glycine from L-serine: step 1/1. Functionally, catalyzes the reversible interconversion of serine and glycine with tetrahydrofolate (THF) serving as the one-carbon carrier. This reaction serves as the major source of one-carbon groups required for the biosynthesis of purines, thymidylate, methionine, and other important biomolecules. Also exhibits THF-independent aldolase activity toward beta-hydroxyamino acids, producing glycine and aldehydes, via a retro-aldol mechanism. The sequence is that of Serine hydroxymethyltransferase from Legionella pneumophila (strain Lens).